The chain runs to 238 residues: MKDFNDIETIDFAETGCSFTREAIASGGYYQALKTPTCKEISGRRYKGTNTPDAVRDLWSTPREVIAYLEGRYGKYDLDAAASEENKVCEKFYSQETNCLKRWWGKNKHVWLNPPYSRPDIFVKKAIEQMEHNNQIDMLLPADNSTAWFTEARQNAAEIIWIEADLTEDIDGNEYARSGRLAFISGETGKAVDGNNKGSVIFIMRELKEGEVQQTHYIPITSICPSVKNKRAKVRKVD.

It belongs to the N(4)/N(6)-methyltransferase family.

The enzyme catalyses a 2'-deoxyadenosine in DNA + S-adenosyl-L-methionine = an N(6)-methyl-2'-deoxyadenosine in DNA + S-adenosyl-L-homocysteine + H(+). Methyltransferase that methylates adenine residues in the dsDNA sequence 5'-GATC-3'. May prevent degradation of viral DNA by the host restriction-modification antiviral defense system. The chain is DNA N-6-adenine-methyltransferase from Escherichia phage T1 (Bacteriophage T1).